The primary structure comprises 444 residues: Glutamyl-tRNA reductase (444 aa).

Residues 49–52, serine 117, 122–124, and glutamine 128 each bind substrate; these read TCNR and EPQ. Cysteine 50 serves as the catalytic Nucleophile. 202–207 is a binding site for NADP(+); sequence GAGETI.

Belongs to the glutamyl-tRNA reductase family. Homodimer.

The enzyme catalyses (S)-4-amino-5-oxopentanoate + tRNA(Glu) + NADP(+) = L-glutamyl-tRNA(Glu) + NADPH + H(+). It participates in porphyrin-containing compound metabolism; protoporphyrin-IX biosynthesis; 5-aminolevulinate from L-glutamyl-tRNA(Glu): step 1/2. In terms of biological role, catalyzes the NADPH-dependent reduction of glutamyl-tRNA(Glu) to glutamate 1-semialdehyde (GSA). The sequence is that of Glutamyl-tRNA reductase from Mannheimia succiniciproducens (strain KCTC 0769BP / MBEL55E).